The chain runs to 495 residues: Membrane-bound lytic murein transglycosylase F (495 aa).

A signal peptide spans 1–29 (MEIRKLSLSTIRSIITSLSVLVLVISASA). Positions 30–273 (TLVRSTPPNV…VTKHFFERHI (244 aa)) are non-LT domain. The interval 274-495 (DEVTTGEAMV…TAAQGENLSL (222 aa)) is LT domain. Residue E320 is part of the active site.

This sequence in the N-terminal section; belongs to the bacterial solute-binding protein 3 family. The protein in the C-terminal section; belongs to the transglycosylase Slt family.

It localises to the cell outer membrane. It carries out the reaction Exolytic cleavage of the (1-&gt;4)-beta-glycosidic linkage between N-acetylmuramic acid (MurNAc) and N-acetylglucosamine (GlcNAc) residues in peptidoglycan, from either the reducing or the non-reducing ends of the peptidoglycan chains, with concomitant formation of a 1,6-anhydrobond in the MurNAc residue.. Functionally, murein-degrading enzyme that degrades murein glycan strands and insoluble, high-molecular weight murein sacculi, with the concomitant formation of a 1,6-anhydromuramoyl product. Lytic transglycosylases (LTs) play an integral role in the metabolism of the peptidoglycan (PG) sacculus. Their lytic action creates space within the PG sacculus to allow for its expansion as well as for the insertion of various structures such as secretion systems and flagella. This is Membrane-bound lytic murein transglycosylase F from Cellvibrio japonicus (strain Ueda107) (Pseudomonas fluorescens subsp. cellulosa).